A 474-amino-acid polypeptide reads, in one-letter code: Siroheme synthase (474 aa).

Positions Met1–Leu203 are precorrin-2 dehydrogenase /sirohydrochlorin ferrochelatase. Residues Glu22–Val23 and Ala43–Ser44 each bind NAD(+). A uroporphyrinogen-III C-methyltransferase region spans residues Gly219–Gly474. Residue Pro228 coordinates S-adenosyl-L-methionine. Residue Asp251 is the Proton acceptor of the active site. Residue Lys273 is the Proton donor of the active site. S-adenosyl-L-methionine-binding positions include Gly304 to Asp306, Ile309, Thr334 to Ala335, Met387, and Gly416.

In the N-terminal section; belongs to the precorrin-2 dehydrogenase / sirohydrochlorin ferrochelatase family. It in the C-terminal section; belongs to the precorrin methyltransferase family.

It catalyses the reaction uroporphyrinogen III + 2 S-adenosyl-L-methionine = precorrin-2 + 2 S-adenosyl-L-homocysteine + H(+). It carries out the reaction precorrin-2 + NAD(+) = sirohydrochlorin + NADH + 2 H(+). The enzyme catalyses siroheme + 2 H(+) = sirohydrochlorin + Fe(2+). It functions in the pathway cofactor biosynthesis; adenosylcobalamin biosynthesis; precorrin-2 from uroporphyrinogen III: step 1/1. Its pathway is cofactor biosynthesis; adenosylcobalamin biosynthesis; sirohydrochlorin from precorrin-2: step 1/1. It participates in porphyrin-containing compound metabolism; siroheme biosynthesis; precorrin-2 from uroporphyrinogen III: step 1/1. The protein operates within porphyrin-containing compound metabolism; siroheme biosynthesis; siroheme from sirohydrochlorin: step 1/1. It functions in the pathway porphyrin-containing compound metabolism; siroheme biosynthesis; sirohydrochlorin from precorrin-2: step 1/1. Multifunctional enzyme that catalyzes the SAM-dependent methylations of uroporphyrinogen III at position C-2 and C-7 to form precorrin-2 via precorrin-1. Then it catalyzes the NAD-dependent ring dehydrogenation of precorrin-2 to yield sirohydrochlorin. Finally, it catalyzes the ferrochelation of sirohydrochlorin to yield siroheme. The sequence is that of Siroheme synthase from Methylococcus capsulatus (strain ATCC 33009 / NCIMB 11132 / Bath).